Reading from the N-terminus, the 96-residue chain is Small ribosomal subunit protein bS6 (96 aa).

This sequence belongs to the bacterial ribosomal protein bS6 family.

Functionally, binds together with bS18 to 16S ribosomal RNA. The chain is Small ribosomal subunit protein bS6 from Streptococcus pyogenes serotype M1.